The chain runs to 396 residues: L-lactate dehydrogenase (396 aa).

The 380-residue stretch at 1 to 380 folds into the FMN hydroxy acid dehydrogenase domain; sequence MIISAASDYR…TQDSLVQGLG (380 aa). Y24 serves as a coordination point for substrate. FMN contacts are provided by S106 and Q127. Y129 is a binding site for substrate. An FMN-binding site is contributed by T155. R164 provides a ligand contact to substrate. K251 serves as a coordination point for FMN. H275 functions as the Proton acceptor in the catalytic mechanism. R278 provides a ligand contact to substrate. 306 to 330 contacts FMN; the sequence is DSGIRNGLDVVRMIALGADTVLLGR.

This sequence belongs to the FMN-dependent alpha-hydroxy acid dehydrogenase family. FMN serves as cofactor.

The protein localises to the cell inner membrane. It catalyses the reaction (S)-lactate + A = pyruvate + AH2. Catalyzes the conversion of L-lactate to pyruvate. Is coupled to the respiratory chain. This chain is L-lactate dehydrogenase, found in Shigella dysenteriae serotype 1 (strain Sd197).